Reading from the N-terminus, the 215-residue chain is Enolase-phosphatase E1 (215 aa).

The Mg(2+) site is built by aspartate 11 and glutamate 13. Substrate-binding positions include 117–118 (SS) and lysine 151. Position 174 (aspartate 174) interacts with Mg(2+).

This sequence belongs to the HAD-like hydrolase superfamily. MasA/MtnC family. As to quaternary structure, monomer. It depends on Mg(2+) as a cofactor.

The protein localises to the cytoplasm. The protein resides in the nucleus. It carries out the reaction 5-methylsulfanyl-2,3-dioxopentyl phosphate + H2O = 1,2-dihydroxy-5-(methylsulfanyl)pent-1-en-3-one + phosphate. It participates in amino-acid biosynthesis; L-methionine biosynthesis via salvage pathway; L-methionine from S-methyl-5-thio-alpha-D-ribose 1-phosphate: step 3/6. It functions in the pathway amino-acid biosynthesis; L-methionine biosynthesis via salvage pathway; L-methionine from S-methyl-5-thio-alpha-D-ribose 1-phosphate: step 4/6. In terms of biological role, bifunctional enzyme that catalyzes the enolization of 2,3-diketo-5-methylthiopentyl-1-phosphate (DK-MTP-1-P) into the intermediate 2-hydroxy-3-keto-5-methylthiopentenyl-1-phosphate (HK-MTPenyl-1-P), which is then dephosphorylated to form the acireductone 1,2-dihydroxy-3-keto-5-methylthiopentene (DHK-MTPene). In Schizosaccharomyces japonicus (strain yFS275 / FY16936) (Fission yeast), this protein is Enolase-phosphatase E1 (utr4).